The following is a 275-amino-acid chain: Large ribosomal subunit protein uL2 (275 aa).

Disordered regions lie at residues 28-54 and 223-275; these read APHA…TRHI and VAMN…RNKK.

It belongs to the universal ribosomal protein uL2 family. In terms of assembly, part of the 50S ribosomal subunit. Forms a bridge to the 30S subunit in the 70S ribosome.

In terms of biological role, one of the primary rRNA binding proteins. Required for association of the 30S and 50S subunits to form the 70S ribosome, for tRNA binding and peptide bond formation. It has been suggested to have peptidyltransferase activity; this is somewhat controversial. Makes several contacts with the 16S rRNA in the 70S ribosome. The polypeptide is Large ribosomal subunit protein uL2 (Saccharophagus degradans (strain 2-40 / ATCC 43961 / DSM 17024)).